The chain runs to 493 residues: Glutamyl-tRNA(Gln) amidotransferase subunit A (493 aa).

Active-site charge relay system residues include K79 and S159. Catalysis depends on S183, which acts as the Acyl-ester intermediate.

It belongs to the amidase family. GatA subfamily. In terms of assembly, heterotrimer of A, B and C subunits.

It catalyses the reaction L-glutamyl-tRNA(Gln) + L-glutamine + ATP + H2O = L-glutaminyl-tRNA(Gln) + L-glutamate + ADP + phosphate + H(+). In terms of biological role, allows the formation of correctly charged Gln-tRNA(Gln) through the transamidation of misacylated Glu-tRNA(Gln) in organisms which lack glutaminyl-tRNA synthetase. The reaction takes place in the presence of glutamine and ATP through an activated gamma-phospho-Glu-tRNA(Gln). This is Glutamyl-tRNA(Gln) amidotransferase subunit A from Rhizobium leguminosarum bv. trifolii (strain WSM2304).